The sequence spans 430 residues: Histidinol dehydrogenase (430 aa).

Positions 237, 259, and 262 each coordinate substrate. Residues glutamine 259 and histidine 262 each contribute to the Zn(2+) site. Catalysis depends on proton acceptor residues glutamate 327 and histidine 328. Substrate-binding residues include histidine 328, aspartate 361, glutamate 415, and histidine 420. Residue aspartate 361 participates in Zn(2+) binding. Zn(2+) is bound at residue histidine 420.

This sequence belongs to the histidinol dehydrogenase family. It depends on Zn(2+) as a cofactor.

It catalyses the reaction L-histidinol + 2 NAD(+) + H2O = L-histidine + 2 NADH + 3 H(+). The protein operates within amino-acid biosynthesis; L-histidine biosynthesis; L-histidine from 5-phospho-alpha-D-ribose 1-diphosphate: step 9/9. Its function is as follows. Catalyzes the sequential NAD-dependent oxidations of L-histidinol to L-histidinaldehyde and then to L-histidine. This is Histidinol dehydrogenase from Sulfurimonas denitrificans (strain ATCC 33889 / DSM 1251) (Thiomicrospira denitrificans (strain ATCC 33889 / DSM 1251)).